We begin with the raw amino-acid sequence, 1832 residues long: Multifunctional protein pyr-3 (1832 aa).

Residues 2-400 (AATVYRPATA…PGPRDTEFLF (399 aa)) are GATase (Glutamine amidotransferase). L-glutamine-binding residues include serine 64, glycine 273, and glycine 275. In terms of domain architecture, Glutamine amidotransferase type-1 spans 228-413 (RILCLDVGMK…IQTVAKCTTD (186 aa)). Cysteine 302 acts as the Nucleophile; for GATase activity in catalysis. L-glutamine-binding residues include leucine 303, glutamine 306, asparagine 344, glycine 346, and tyrosine 347. Active-site for GATase activity residues include histidine 386 and glutamate 388. The linker stretch occupies residues 401-442 (DVFIQTVAKCTTDNTLLQKGVEFPGGTTEENERLHPRVDVKK). Residues 443–983 (VLVLGSGGLS…SEHDVSFEDR (541 aa)) are CPSase A. The CPSase (Carbamoyl phosphate synthase) stretch occupies residues 443–1484 (VLVLGSGGLS…TNVKNAKILV (1042 aa)). Residues arginine 560, arginine 600, glycine 606, glycine 607, arginine 637, methionine 639, glutamate 644, glycine 670, isoleucine 671, histidine 672, glutamine 713, and glutamate 727 each coordinate ATP. 2 ATP-grasp domains span residues 564-756 (ARSM…KLGL) and 1102-1293 (SRML…KAIM). The Mg(2+) site is built by glutamine 713, glutamate 727, and asparagine 729. Residues glutamine 713, glutamate 727, and asparagine 729 each contribute to the Mn(2+) site. The tract at residues 984 to 1484 (GVMVLGSGVY…TNVKNAKILV (501 aa)) is CPSase B. 10 residues coordinate ATP: arginine 1138, lysine 1177, isoleucine 1179, glutamate 1184, glycine 1209, valine 1210, histidine 1211, serine 1212, glutamine 1252, and glutamate 1264. Residues glutamine 1252, glutamate 1264, and asparagine 1266 each coordinate Mg(2+). Mn(2+) is bound by residues glutamine 1252, glutamate 1264, and asparagine 1266. The region spanning 1359-1507 (FKVPKKNILL…RDYQTSHTPL (149 aa)) is the MGS-like domain. Residues 1485–1528 (EAIARYRDMEIGERDYQTSHTPLQLSGQVNFTLQDSLSRPHSFK) form a linker region. The interval 1529–1832 (KAHVLSVEQY…MALLALVMSG (304 aa)) is ATCase (Aspartate transcarbamylase). 2 residues coordinate carbamoyl phosphate: arginine 1581 and threonine 1582. Lysine 1609 contacts L-aspartate. 3 residues coordinate carbamoyl phosphate: arginine 1630, histidine 1658, and glutamine 1661. 2 residues coordinate L-aspartate: arginine 1691 and arginine 1754. Leucine 1793 and proline 1794 together coordinate carbamoyl phosphate.

This sequence in the N-terminal section; belongs to the CarA family. The protein in the central section; belongs to the CarB family. It in the C-terminal section; belongs to the aspartate/ornithine carbamoyltransferase superfamily. ATCase family. Mg(2+) serves as cofactor. Requires Mn(2+) as cofactor.

It is found in the cytoplasm. It localises to the nucleus. It catalyses the reaction hydrogencarbonate + L-glutamine + 2 ATP + H2O = carbamoyl phosphate + L-glutamate + 2 ADP + phosphate + 2 H(+). The catalysed reaction is L-glutamine + H2O = L-glutamate + NH4(+). The enzyme catalyses hydrogencarbonate + NH4(+) + 2 ATP = carbamoyl phosphate + 2 ADP + phosphate + 2 H(+). It carries out the reaction carbamoyl phosphate + L-aspartate = N-carbamoyl-L-aspartate + phosphate + H(+). The protein operates within pyrimidine metabolism; UMP biosynthesis via de novo pathway; (S)-dihydroorotate from bicarbonate: step 1/3. Its pathway is pyrimidine metabolism; UMP biosynthesis via de novo pathway; (S)-dihydroorotate from bicarbonate: step 2/3. With respect to regulation, both CPSase and ATCase activities are feedback inhibited by the end product UTP. Its function is as follows. Multifunctional protein that encodes the first 2 enzymatic activities of the de novo pyrimidine pathway: carbamoylphosphate synthetase (CPSase; EC 6.3.5.5) and aspartate transcarbamylase (ATCase; EC 2.1.3.2). The CPSase-function is accomplished in 2 steps, by a glutamine-dependent amidotransferase activity (GATase) that binds and cleaves glutamine to produce ammonia, followed by an ammonium-dependent carbamoyl phosphate synthetase, which reacts with the ammonia, hydrogencarbonate and ATP to form carbamoyl phosphate. The endogenously produced carbamoyl phosphate is sequestered and channeled to the ATCase active site. ATCase then catalyzes the formation of carbamoyl-L-aspartate from L-aspartate and carbamoyl phosphate. The protein is Multifunctional protein pyr-3 (pyr-3) of Neurospora crassa (strain ATCC 24698 / 74-OR23-1A / CBS 708.71 / DSM 1257 / FGSC 987).